An 866-amino-acid chain; its full sequence is Ribosome biogenesis protein BOP1 homolog (866 aa).

Disordered stretches follow at residues Met1 to Arg180 and Pro214 to Ile241. Composition is skewed to acidic residues over residues Val37–Asn52, Gly60–Pro146, and Thr167–Thr179. WD repeat units follow at residues Gly527–Thr566, Pro568–Val608, Lys697–Lys735, Pro738–Gln777, Leu781–Gln820, and Val836–Thr866.

It belongs to the WD repeat BOP1/ERB1 family.

It localises to the nucleus. Its subcellular location is the nucleolus. It is found in the nucleoplasm. Functionally, required for maturation of ribosomal RNAs and formation of the large ribosomal subunit. The sequence is that of Ribosome biogenesis protein BOP1 homolog from Aedes aegypti (Yellowfever mosquito).